Here is a 640-residue protein sequence, read N- to C-terminus: Threonine--tRNA ligase (640 aa).

The TGS domain occupies methionine 1–threonine 60. The interval aspartate 241–proline 538 is catalytic. Cysteine 334, histidine 385, and histidine 515 together coordinate Zn(2+).

The protein belongs to the class-II aminoacyl-tRNA synthetase family. As to quaternary structure, homodimer. Requires Zn(2+) as cofactor.

The protein localises to the cytoplasm. It catalyses the reaction tRNA(Thr) + L-threonine + ATP = L-threonyl-tRNA(Thr) + AMP + diphosphate + H(+). In terms of biological role, catalyzes the attachment of threonine to tRNA(Thr) in a two-step reaction: L-threonine is first activated by ATP to form Thr-AMP and then transferred to the acceptor end of tRNA(Thr). Also edits incorrectly charged L-seryl-tRNA(Thr). This is Threonine--tRNA ligase from Listeria welshimeri serovar 6b (strain ATCC 35897 / DSM 20650 / CCUG 15529 / CIP 8149 / NCTC 11857 / SLCC 5334 / V8).